The primary structure comprises 500 residues: NAD(P)H-quinone oxidoreductase chain 4, chloroplastic (500 aa).

A run of 14 helical transmembrane segments spans residues 4–24 (FPWL…MLFL), 35–55 (YTIC…CYNF), 87–107 (IGTI…AFPV), 113–130 (LFHF…GSFS), 134–154 (LLLF…LLSM), 167–187 (FILY…GISL), 211–231 (IILY…IPLH), 242–262 (HYST…YGLV), 272–292 (AHSM…IYAA), 305–325 (IAYS…SITD), 330–350 (GAIL…FLAG), 386–406 (LALP…GIIT), 416–436 (ILII…LLSM), and 466–486 (ISSL…LALA).

The protein belongs to the complex I subunit 4 family.

It localises to the plastid. Its subcellular location is the chloroplast thylakoid membrane. The catalysed reaction is a plastoquinone + NADH + (n+1) H(+)(in) = a plastoquinol + NAD(+) + n H(+)(out). It catalyses the reaction a plastoquinone + NADPH + (n+1) H(+)(in) = a plastoquinol + NADP(+) + n H(+)(out). The sequence is that of NAD(P)H-quinone oxidoreductase chain 4, chloroplastic from Aethionema grandiflorum (Persian stone-cress).